The following is a 977-amino-acid chain: SLIT and NTRK-like protein 3 (977 aa).

Residues 1 to 26 (MKPSIAEMLHRGRMLWIILLSTIALG) form the signal peptide. The Extracellular segment spans residues 29–654 (TPIPLIEDSE…SPPGGPVPLS (626 aa)). Residue asparagine 68 is glycosylated (N-linked (GlcNAc...) asparagine). LRR repeat units lie at residues 78-99 (RPFK…SFLH), 102-123 (NAVS…AFNG), 126-147 (ILKR…TFLG), 150-171 (SLEY…AFRN), 174-195 (KLRV…LFKA), and 197-218 (SLTH…GMLD). The LRRCT 1 domain maps to 232–283 (NPWNCTCEIVQLKSWLERIPYTALVGDITCETPFHFHGKDLREIRKTELCPL). Positions 325–360 (EYKSSNKQPKPTKQPRTPRPPSTSQALYPGPNQPPI) are disordered. The LRRNT domain occupies 364-406 (QTRPPIPIICPTGCTCNLHINDLGLTVNCKERGFNNISELLPR). 6 LRR repeats span residues 409-430 (NAKK…DFWN), 433-454 (SLDL…AFIN), 457-478 (NLKS…MFRG), 481-502 (SLHY…AFSL), 505-526 (NLKL…AFAG), and 528-549 (SLAR…GVLE). Residues 562 to 613 (NPWDCTCDLVPFKQWIETISSVSVVGDVLCRSPENLTHRDVRTIELEVLCPE) form the LRRCT 2 domain. The N-linked (GlcNAc...) asparagine glycan is linked to asparagine 596. The helical transmembrane segment at 655–675 (VLILSLLVLFFSAVFVAAGLF) threads the bilayer. The Cytoplasmic segment spans residues 676 to 977 (AYVLRRRRKK…EVLEKTTYRF (302 aa)). 2 disordered regions span residues 708-735 (LFED…KAPP) and 761-790 (EEEV…MGEA). Gly residues predominate over residues 711 to 724 (DGGGGGGGSGGGGR). The segment covering 765-775 (AVSSAQEAGSA) has biased composition (low complexity).

The protein belongs to the SLITRK family. In terms of tissue distribution, expressed in the occipital lobe of the cerebral cortex of the brain. Expressed at higher levels in some astrocytic brain tumors such as astrocytomas, oligodendrogliomas, glioblastomas, gangliogliomas and primitive neuroectodermal tumors.

It localises to the membrane. Suppresses neurite outgrowth. In Homo sapiens (Human), this protein is SLIT and NTRK-like protein 3 (SLITRK3).